Here is a 273-residue protein sequence, read N- to C-terminus: SKA complex subunit 1 homolog (273 aa).

A coiled-coil region spans residues 77 to 97 (KKLVQRSLKEEEKLQHMLANL).

This sequence belongs to the SKA1 family.

This chain is SKA complex subunit 1 homolog, found in Zea mays (Maize).